Reading from the N-terminus, the 107-residue chain is MMAARIKKGDQVVVITGSSKGSRGEVLSVRPDDNKAVVRGVAVAKRHTRPNRMGEQGGIIEKEMPIHLSNLKLVDPKSGKPTRVGFRILEDGRKVRVAKATGEVVEG.

Belongs to the universal ribosomal protein uL24 family. In terms of assembly, part of the 50S ribosomal subunit.

Its function is as follows. One of two assembly initiator proteins, it binds directly to the 5'-end of the 23S rRNA, where it nucleates assembly of the 50S subunit. In terms of biological role, one of the proteins that surrounds the polypeptide exit tunnel on the outside of the subunit. The chain is Large ribosomal subunit protein uL24 from Gluconacetobacter diazotrophicus (strain ATCC 49037 / DSM 5601 / CCUG 37298 / CIP 103539 / LMG 7603 / PAl5).